The primary structure comprises 243 residues: Protein DMP8 (243 aa).

The tract at residues Met-1–Leu-37 is disordered. A compositionally biased stretch (low complexity) spans Thr-14–Pro-29. 4 helical membrane-spanning segments follow: residues Met-70–Ile-90, Gly-98–Phe-118, Val-174–Asp-194, and Val-212–Pro-232.

The protein belongs to the plant DMP1 protein family. As to expression, restricted to flowers.

The protein localises to the endoplasmic reticulum membrane. The protein resides in the vacuole membrane. Functionally, involved in membrane remodeling. This is Protein DMP8 from Arabidopsis thaliana (Mouse-ear cress).